The chain runs to 433 residues: Succinate--CoA ligase [GDP-forming] subunit beta, mitochondrial (433 aa).

A mitochondrion-targeting transit peptide spans 1-38; sequence MASPVAIAAQAGKLLRERALRPLLAVRSQAGHLTPRRW. Positions 47-275 constitute an ATP-grasp domain; it reads KKLMSEHGVR…NAEFRQKDIF (229 aa). Position 58 (Gln58) interacts with GTP. Lys67 is subject to N6-acetyllysine; alternate. Lys67 carries the N6-succinyllysine; alternate modification. N6-acetyllysine is present on Lys74. Lys79 carries the N6-succinyllysine modification. 91–93 is a GTP binding site; that stretch reads GRG. Residues Lys112, Lys133, and Lys140 each carry the N6-acetyllysine modification. Leu147 provides a ligand contact to GTP. Ser162 is modified (phosphoserine). Residue Lys201 is modified to N6-acetyllysine. Phosphoserine is present on Ser217. N6-acetyllysine occurs at positions 219 and 228. Positions 244 and 258 each coordinate Mg(2+). Residue Lys272 is modified to N6-acetyllysine. Asn309 contacts substrate. Lys339 is subject to N6-succinyllysine. Lys348 bears the N6-acetyllysine mark. 366–368 is a substrate binding site; it reads GIV. N6-acetyllysine is present on residues Lys387, Lys407, and Lys424.

Belongs to the succinate/malate CoA ligase beta subunit family. GTP-specific subunit beta subfamily. As to quaternary structure, heterodimer of an alpha and a beta subunit. The beta subunit determines specificity for GTP. Mg(2+) serves as cofactor.

Its subcellular location is the mitochondrion. The enzyme catalyses GTP + succinate + CoA = succinyl-CoA + GDP + phosphate. It participates in carbohydrate metabolism; tricarboxylic acid cycle; succinate from succinyl-CoA (ligase route): step 1/1. Functionally, GTP-specific succinyl-CoA synthetase functions in the citric acid cycle (TCA), coupling the hydrolysis of succinyl-CoA to the synthesis of GTP and thus represents the only step of substrate-level phosphorylation in the TCA. The beta subunit provides nucleotide specificity of the enzyme and binds the substrate succinate, while the binding sites for coenzyme A and phosphate are found in the alpha subunit. This Mus musculus (Mouse) protein is Succinate--CoA ligase [GDP-forming] subunit beta, mitochondrial.